The following is a 2429-amino-acid chain: Highly reducing polyketide synthase acrA (2429 aa).

The 433-residue stretch at 4–436 (PEPIAIVGMG…GTNAHAIIES (433 aa)) folds into the Ketosynthase family 3 (KS3) domain. Residues cysteine 177, histidine 314, and histidine 356 each act as for beta-ketoacyl synthase activity in the active site. The tract at residues 541 to 861 (VFTGQGAQWP…PYSGTLSRGQ (321 aa)) is malonyl-CoA:ACP transacylase (MAT) domain. Residues 931-1068 (HPLLGVRSTE…GTVRVVLGPA (138 aa)) form an N-terminal hotdog fold region. The segment at 931-1229 (HPLLGVRSTE…RCSSLTPPGP (299 aa)) is dehydratase (DH) domain. In terms of domain architecture, PKS/mFAS DH spans 931–1230 (HPLLGVRSTE…CSSLTPPGPR (300 aa)). Histidine 963 functions as the Proton acceptor; for dehydratase activity in the catalytic mechanism. A C-terminal hotdog fold region spans residues 1082–1230 (VFHEVKTERF…CSSLTPPGPR (149 aa)). The active-site Proton donor; for dehydratase activity is aspartate 1141. The tract at residues 1388-1577 (NGYMGRVAGQ…VNDFVDESKY (190 aa)) is methyltransferase (MT) domain. Residues 2065 to 2235 (TYLLVGCTGG…ARGLAASVFH (171 aa)) are ketoreductase (KR) domain. The Carrier domain maps to 2351–2428 (EVDGVIQEAF…ELCREAASEV (78 aa)). Residue serine 2388 is modified to O-(pantetheine 4'-phosphoryl)serine.

It functions in the pathway secondary metabolite biosynthesis. Functionally, highly reducing polyketide synthase; part of the cluster that mediates the biosynthesis of acurin A, a highly reduced polyketide coupled to a serine via a peptide bond. The activities of the highly reducing polyketide synthase acrA and the nonribosomal peptide synthetase acrB are collectively responsible for the synthesis of the acurin A core structure with a heptaketide backbone produced by acrA covalently fused to a L-serine by acrB. After the formation of the PK-NRP hybrid product, it is detached from acrB by reductive release to set up the formation of the lactam ring by aldol condensation. The hydrolyase acrC then catalyzes water loss to generate a double bond in the ring. This double bond is probably reduced, which is followed by three oxidations at C-22 to generate the carboxylic acid moiety, involving probably the FAD-binding monooxygenase acrE and the cytochrome P450 monooxygenases acrD and acrF. Finally, a last methylation step performed by the O-methyltransferase acrG leads to the production of acurin A. The sequence is that of Highly reducing polyketide synthase acrA from Aspergillus aculeatus (strain ATCC 16872 / CBS 172.66 / WB 5094).